A 110-amino-acid polypeptide reads, in one-letter code: CHH-like protein (110 aa).

A signal peptide spans Met1 to Ala23. The propeptide occupies Leu24–Arg35. Disulfide bonds link Cys42/Cys78, Cys58/Cys74, and Cys61/Cys87. Valine amide is present on Val107.

This sequence belongs to the arthropod CHH/MIH/GIH/VIH hormone family.

Its subcellular location is the secreted. This chain is CHH-like protein (CHHL), found in Bombyx mori (Silk moth).